Here is a 211-residue protein sequence, read N- to C-terminus: Thymidylate kinase (211 aa).

11–18 (GPDGAGKT) lines the ATP pocket.

Belongs to the thymidylate kinase family.

The catalysed reaction is dTMP + ATP = dTDP + ADP. Phosphorylation of dTMP to form dTDP in both de novo and salvage pathways of dTTP synthesis. The polypeptide is Thymidylate kinase (Streptococcus pyogenes serotype M18 (strain MGAS8232)).